We begin with the raw amino-acid sequence, 464 residues long: Cysteine--tRNA ligase (464 aa).

Cys-32 is a binding site for Zn(2+). Positions 34 to 44 match the 'HIGH' region motif; it reads VTVYDDCHIGH. Cys-213, His-238, and Glu-242 together coordinate Zn(2+). Residues 270 to 274 carry the 'KMSKS' region motif; sequence KMSKS. Lys-273 contacts ATP.

It belongs to the class-I aminoacyl-tRNA synthetase family. Monomer. Zn(2+) serves as cofactor.

The protein resides in the cytoplasm. The enzyme catalyses tRNA(Cys) + L-cysteine + ATP = L-cysteinyl-tRNA(Cys) + AMP + diphosphate. The chain is Cysteine--tRNA ligase from Francisella tularensis subsp. holarctica (strain LVS).